The following is a 1288-amino-acid chain: Mitogen-activated protein kinase kinase kinase 6 (1288 aa).

In terms of domain architecture, Protein kinase spans 648-906; the sequence is TGERLVLGKG…AQTLLGDPFL (259 aa). ATP-binding positions include 654–662 and Lys-677; that span reads LGKGTYGVV. Residue Asp-771 is the Proton acceptor of the active site. Thr-806 carries the phosphothreonine modification. A disordered region spans residues 899-997; sequence TLLGDPFLQP…SSGLSLLHQE (99 aa). The span at 914-952 shows a compositional bias: low complexity; sequence SPSSPRHAPRPSDAPSASPTPSANSTTQSQTFPCPQAPS. Phosphoserine occurs at positions 964 and 984. Low complexity predominate over residues 980 to 989; sequence EEPASPEESS. The stretch at 1004 to 1029 forms a coiled coil; that stretch reads LAAVLEQELPALAENLHQEQKQEQGA. Residues 1123–1134 are compositionally biased toward basic and acidic residues; it reads VEKEAVSPRSEE. Residues 1123-1157 are disordered; that stretch reads VEKEAVSPRSEELSNEGDSQQSPGQQSPLPVEPEQ. Ser-1129 and Ser-1149 each carry phosphoserine. Positions 1141–1151 are enriched in low complexity; sequence SQQSPGQQSPL. Positions 1166–1205 form a coiled coil; it reads LSLLRAETDRLREILAGKEREYQALVQRALQRLNEEARTY.

It belongs to the protein kinase superfamily. STE Ser/Thr protein kinase family. MAP kinase kinase kinase subfamily. As to quaternary structure, binds both upstream activators and downstream substrates in multimolecular complexes. Requires Mg(2+) as cofactor.

The catalysed reaction is L-seryl-[protein] + ATP = O-phospho-L-seryl-[protein] + ADP + H(+). It catalyses the reaction L-threonyl-[protein] + ATP = O-phospho-L-threonyl-[protein] + ADP + H(+). With respect to regulation, activated by phosphorylation on Thr-806. Catalytically active only when complexed with MAP3K5, with MAP3K5 supporting the stability and the active configuration of MAP3K6 and MAP3K6 activating MAP3K5 by direct phosphorylation. Component of a protein kinase signal transduction cascade. Activates the JNK, but not ERK or p38 kinase pathways. The sequence is that of Mitogen-activated protein kinase kinase kinase 6 (MAP3K6) from Homo sapiens (Human).